The chain runs to 152 residues: 3-dehydroquinate dehydratase (152 aa).

Residue Tyr-22 is the Proton acceptor of the active site. Residues Asn-73, His-79, and Asp-86 each contribute to the substrate site. The active-site Proton donor is the His-99. Substrate is bound by residues Leu-100–Ser-101 and Arg-110.

It belongs to the type-II 3-dehydroquinase family. In terms of assembly, homododecamer.

The enzyme catalyses 3-dehydroquinate = 3-dehydroshikimate + H2O. Its pathway is metabolic intermediate biosynthesis; chorismate biosynthesis; chorismate from D-erythrose 4-phosphate and phosphoenolpyruvate: step 3/7. Its function is as follows. Catalyzes a trans-dehydration via an enolate intermediate. The sequence is that of 3-dehydroquinate dehydratase from Gemmatimonas aurantiaca (strain DSM 14586 / JCM 11422 / NBRC 100505 / T-27).